The following is a 450-amino-acid chain: MVKPFEPEFQQALDELTTSLQPFLDANPQYKKALEIVQVPERVLQFRVVWEDDQGVAQVNHGFRVQYNSALGPYKGGLRLHPSVNLSILKFLGFEQTFKNALTGLSMGGGKGGSDFDPKGKSDSEIRRFCFSFMGELFRHIGSDTDVPAGDIGTGGREIGFLFGAYKKLRNEFTGMLTGKGLTWGGSFIRPEATGYGLIYFVEHMIAKACPEYSLDKPSTLVAISGSGNVAQFTALKVIELGATVLSLSDSKGSLISDKGYTKEFIRKVADLKLKGGSLASLANEEGYTYHAGARPWTLIPTIHIALPGATQNEVSAEEAEALLKAGVRIVAEGSNMGCTADAIDIFESSRKAGPGGVWYAPGKASNCGGVAVSGLEMAQNSQRLAWTTQEVDSKLKDIMAECYGICLTAGTKWSGEELTDEVLPSLLSGANVAGFIKVADAMKAQGDWW.

Residue Lys111 is part of the active site.

Belongs to the Glu/Leu/Phe/Val dehydrogenases family. Homohexamer.

The enzyme catalyses L-glutamate + NADP(+) + H2O = 2-oxoglutarate + NH4(+) + NADPH + H(+). The protein is NADP-specific glutamate dehydrogenase of Hebeloma cylindrosporum.